The primary structure comprises 417 residues: NADH-quinone oxidoreductase subunit D (417 aa).

It belongs to the complex I 49 kDa subunit family. In terms of assembly, NDH-1 is composed of 14 different subunits. Subunits NuoB, C, D, E, F, and G constitute the peripheral sector of the complex.

The protein localises to the cell inner membrane. The catalysed reaction is a quinone + NADH + 5 H(+)(in) = a quinol + NAD(+) + 4 H(+)(out). In terms of biological role, NDH-1 shuttles electrons from NADH, via FMN and iron-sulfur (Fe-S) centers, to quinones in the respiratory chain. The immediate electron acceptor for the enzyme in this species is believed to be ubiquinone. Couples the redox reaction to proton translocation (for every two electrons transferred, four hydrogen ions are translocated across the cytoplasmic membrane), and thus conserves the redox energy in a proton gradient. This Nitrosospira multiformis (strain ATCC 25196 / NCIMB 11849 / C 71) protein is NADH-quinone oxidoreductase subunit D.